We begin with the raw amino-acid sequence, 341 residues long: tRNA N6-adenosine threonylcarbamoyltransferase (341 aa).

Fe cation-binding residues include His111 and His115. Residues 134–138 (LVSGG), Asp167, Gly180, and Asn276 each bind substrate. Asp304 serves as a coordination point for Fe cation.

The protein belongs to the KAE1 / TsaD family. Fe(2+) is required as a cofactor.

It is found in the cytoplasm. The enzyme catalyses L-threonylcarbamoyladenylate + adenosine(37) in tRNA = N(6)-L-threonylcarbamoyladenosine(37) in tRNA + AMP + H(+). Required for the formation of a threonylcarbamoyl group on adenosine at position 37 (t(6)A37) in tRNAs that read codons beginning with adenine. Is involved in the transfer of the threonylcarbamoyl moiety of threonylcarbamoyl-AMP (TC-AMP) to the N6 group of A37, together with TsaE and TsaB. TsaD likely plays a direct catalytic role in this reaction. The protein is tRNA N6-adenosine threonylcarbamoyltransferase of Ectopseudomonas mendocina (strain ymp) (Pseudomonas mendocina).